Consider the following 771-residue polypeptide: Protein lin-54 homolog (771 aa).

2 disordered regions span residues 21–44 (AMDE…SAQV) and 68–105 (TNAK…IPSL). Low complexity predominate over residues 72-92 (STTSSTTQLLLTPSSSSSTTT). Phosphoserine occurs at positions 288, 292, and 308. The CRC domain maps to 544–657 (PRKPCNCTRS…KCMGCKNFEE (114 aa)). Residues 546-559 (KPCNCTRSQCLKLY) are DNA-binding. Zn(2+) contacts are provided by cysteine 548, cysteine 550, cysteine 555, cysteine 560, cysteine 562, cysteine 569, cysteine 572, cysteine 574, and cysteine 577. Positions 606–619 (IGKGKEGESDRRHS) are linker. Residues cysteine 622, cysteine 624, cysteine 629, cysteine 634, cysteine 636, cysteine 643, cysteine 647, cysteine 649, and cysteine 652 each contribute to the Zn(2+) site. The DNA-binding stretch occupies residues 622–635 (CNCKKSGCLKNYCE).

The protein belongs to the lin-54 family. Component of the DREAM complex.

Its subcellular location is the nucleus. Component of the DREAM complex, a multiprotein complex that can both act as a transcription activator or repressor depending on the context. Specifically recognizes the consensus motif 5'-TTYRAA-3' in target DNA. The sequence is that of Protein lin-54 homolog (lin54) from Danio rerio (Zebrafish).